The chain runs to 389 residues: MSVRIVDVREITKPISSPIRNAYIDFTKMTTSLVAVVTDVVREGKRVVGYGFNSNGRYGQGGLIRERFASRILEADPKKLLNEAGDNLDPDKVWAAMMINEKPGGHGERSVAVGTIDMAVWDAVAKIAGKPLFRLLAERHGVKANPRVFVYAAGGYYYPGKGLSMLRGEMRGYLDRGYNVVKMKIGGAPIEEDRMRIEAVLEEIGKDAQLAVDANGRFNLETGIAYAKMLRDYPLFWYEEVGDPLDYALQAALAEFYPGPMATGENLFSHQDARNLLRYGGMRPDRDWLQFDCALSYGLCEYQRTLEVLKTHGWSPSRCIPHGGHQMSLNIAAGLGLGGNESYPDLFQPYGGFPDGVRVENGHITMPDLPGIGFEGKSDLYKEMKALAE.

Residues N21, N55, K102, Y156, K182, 182 to 184, 213 to 215, E239, E265, H322, and 341 to 343 contribute to the substrate site; these read KMK, DAN, and ESY. K184 serves as the catalytic acceptor. 3 residues coordinate Mg(2+): D213, E239, and E265. The active-site Proton donor/acceptor is H322.

The protein belongs to the mandelate racemase/muconate lactonizing enzyme family. In terms of assembly, homooctamer; tetramer of dimers. Requires Mg(2+) as cofactor.

It carries out the reaction (S,S)-tartrate = oxaloacetate + H2O. Its function is as follows. Catalyzes the dehydration of D-tartrate to oxaloacetate. The sequence is that of D(-)-tartrate dehydratase (tarD) from Bradyrhizobium diazoefficiens (strain JCM 10833 / BCRC 13528 / IAM 13628 / NBRC 14792 / USDA 110).